The following is a 1176-amino-acid chain: Myosin light chain kinase, smooth muscle (1176 aa).

Residues 1 to 41 (MDFRANLQRQVKPKTLSEEERKVHGPQQVDFRSVLAKKGTP) form an actin-binding (calcium/calmodulin-sensitive) region. The tract at residues 1 to 354 (MDFRANLQRQ…SEKRPESRGT (354 aa)) is disordered. A calmodulin-binding region spans residues 26–41 (PQQVDFRSVLAKKGTP). The segment covering 43-55 (TPVPEKVPPPKPA) has biased composition (pro residues). Tandem repeats lie at residues 100 to 111 (FLKPVGNAKLAD), 112 to 123 (TPKPLSSTKPAE), 124 to 135 (TPKPLGNVKPAE), 136 to 147 (TPKPLGSTKPAE), 148 to 159 (TPKPLGSTKPAE), 160 to 171 (TPKPLGNVKPAE), 172 to 183 (TPKPLGNIKPTE), 184 to 195 (TPKPLGSTKPAE), 196 to 207 (TPKPLGSTKPAE), 208 to 219 (TPKPLGNVKPAE), 220 to 231 (TPKPLGNVKPAE), 232 to 243 (TPKPLGNVKPAE), 244 to 255 (TPKPVSNAKPAE), 256 to 267 (TLKPVGNAKPAE), 268 to 279 (TPKPLSNVKPAE), and 280 to 291 (TPKLVGNAKPAE). Residues 100-291 (FLKPVGNAKL…KLVGNAKPAE (192 aa)) form a 16 X 12 AA tandem repeats region. At serine 202 the chain carries Phosphoserine. Positions 319–721 (PTGKEELKKE…TVTVNTEQKV (403 aa)) are actin-binding (calcium/calmodulin-insensitive). Residues 320–335 (TGKEELKKEIKNDVNC) are compositionally biased toward basic and acidic residues. Residues 356–444 (PTFEEKLQDL…GQAESSCQVT (89 aa)) form the Ig-like C2-type 1 domain. A disulfide bridge links cysteine 377 with cysteine 428. Positions 448-497 (PDAPTSENAKAPEMKARRPKSSLPPVLGTESDATVKKKPAPKTPPKAAMP) are disordered. The 89-residue stretch at 498-586 (PQIIQFPEDQ…GSRQAQVNLT (89 aa)) folds into the Ig-like C2-type 2 domain. The Fibronectin type-III domain maps to 594–686 (PAGTPCASDI…QESELTALGE (93 aa)). The disordered stretch occupies residues 673–707 (SEPSQESELTALGEKPEEEPKDEVEVSDDDEKEPE). Positions 688 to 706 (PEEEPKDEVEVSDDDEKEP) are enriched in acidic residues. Serine 699 is modified (phosphoserine). The residue at position 710 (tyrosine 710) is a Phosphotyrosine; by ABL1. The Protein kinase domain occupies 725–980 (YDIEERLGSG…CTQCLQHPWL (256 aa)). ATP contacts are provided by residues 731-739 (LGSGKFGQV) and lysine 754. A Phosphotyrosine; by ABL1 modification is found at tyrosine 836. Catalysis depends on aspartate 846, which acts as the Proton acceptor. A Phosphotyrosine; by ABL1 modification is found at tyrosine 896. Residues 972 to 1035 (TQCLQHPWLM…SGLSGRKSST (64 aa)) form a calmodulin-binding region. A phosphoserine mark is found at serine 1020, serine 1021, serine 1033, serine 1034, and serine 1037. Threonine 1039 bears the Phosphothreonine mark. Phosphoserine is present on serine 1040. In terms of domain architecture, Ig-like C2-type 3 spans 1069–1158 (PYFSKTIRDL…GEATCTAELI (90 aa)). Residues cysteine 1090 and cysteine 1142 are joined by a disulfide bond.

It belongs to the protein kinase superfamily. CAMK Ser/Thr protein kinase family. All isoforms including Telokin bind calmodulin. Interacts with SVIL. Interacts with CTTN; this interaction is reduced during thrombin-induced endothelial cell (EC) contraction but is promoted by the barrier-protective agonist sphingosine 1-phosphate (S1P) within lamellipodia. A complex made of ABL1, CTTN and MYLK regulates cortical actin-based cytoskeletal rearrangement critical to sphingosine 1-phosphate (S1P)-mediated endothelial cell (EC) barrier enhancement. Binds to NAA10/ARD1 and PTK2B/PYK2. Requires Mg(2+) as cofactor. Ca(2+) serves as cofactor. Post-translationally, the C-terminus is deglutamylated by AGTPBP1/CCP1, AGBL1/CCP4 and AGBL4/CCP6, leading to the formation of Myosin light chain kinase, smooth muscle, deglutamylated form. The consequences of C-terminal deglutamylation are unknown. Can probably be down-regulated by phosphorylation. Tyrosine phosphorylation by ABL1 increases kinase activity, reverses MLCK-mediated inhibition of Arp2/3-mediated actin polymerization, and enhances CTTN-binding. Phosphorylation by SRC promotes CTTN binding.

The protein resides in the cytoplasm. The protein localises to the cell projection. It localises to the lamellipodium. It is found in the cleavage furrow. Its subcellular location is the cytoskeleton. The protein resides in the stress fiber. The catalysed reaction is L-seryl-[myosin light chain] + ATP = O-phospho-L-seryl-[myosin light chain] + ADP + H(+). The enzyme catalyses L-threonyl-[myosin light chain] + ATP = O-phospho-L-threonyl-[myosin light chain] + ADP + H(+). Calcium/calmodulin-dependent myosin light chain kinase implicated in smooth muscle contraction via phosphorylation of myosin light chains (MLC). Also regulates actin-myosin interaction through a non-kinase activity. Phosphorylates PTK2B/PYK2 and myosin light-chains. Involved in the inflammatory response (e.g. apoptosis, vascular permeability, leukocyte diapedesis), cell motility and morphology, airway hyperreactivity and other activities relevant to asthma. Required for tonic airway smooth muscle contraction that is necessary for physiological and asthmatic airway resistance. Necessary for gastrointestinal motility. Implicated in the regulation of endothelial as well as vascular permeability, probably via the regulation of cytoskeletal rearrangements. In the nervous system it has been shown to control the growth initiation of astrocytic processes in culture and to participate in transmitter release at synapses formed between cultured sympathetic ganglion cells. Critical participant in signaling sequences that result in fibroblast apoptosis. Plays a role in the regulation of epithelial cell survival. Required for epithelial wound healing, especially during actomyosin ring contraction during purse-string wound closure. Mediates RhoA-dependent membrane blebbing. Triggers TRPC5 channel activity in a calcium-dependent signaling, by inducing its subcellular localization at the plasma membrane. Promotes cell migration (including tumor cells) and tumor metastasis. PTK2B/PYK2 activation by phosphorylation mediates ITGB2 activation and is thus essential to trigger neutrophil transmigration during acute lung injury (ALI). May regulate optic nerve head astrocyte migration. Probably involved in mitotic cytoskeletal regulation. Regulates tight junction probably by modulating ZO-1 exchange in the perijunctional actomyosin ring. Mediates burn-induced microvascular barrier injury; triggers endothelial contraction in the development of microvascular hyperpermeability by phosphorylating MLC. Essential for intestinal barrier dysfunction. Mediates Giardia spp.-mediated reduced epithelial barrier function during giardiasis intestinal infection via reorganization of cytoskeletal F-actin and tight junctional ZO-1. Necessary for hypotonicity-induced Ca(2+) entry and subsequent activation of volume-sensitive organic osmolyte/anion channels (VSOAC) in cervical cancer cells. This chain is Myosin light chain kinase, smooth muscle (MYLK), found in Bos taurus (Bovine).